Consider the following 88-residue polypeptide: Sec-independent protein translocase protein TatA (88 aa).

Residues 1-21 (MGGISITQLLIIASIVVVLFG) form a helical membrane-spanning segment. The disordered stretch occupies residues 39-88 (FKKSMSEDDNTTSTSSDKSSQDADFTAPPIEPKANLACPDEAKNKDKEHV). The span at 49 to 62 (TTSTSSDKSSQDAD) shows a compositional bias: low complexity. Positions 78 to 88 (DEAKNKDKEHV) are enriched in basic and acidic residues.

It belongs to the TatA/E family. In terms of assembly, the Tat system comprises two distinct complexes: a TatABC complex, containing multiple copies of TatA, TatB and TatC subunits, and a separate TatA complex, containing only TatA subunits. Substrates initially bind to the TatABC complex, which probably triggers association of the separate TatA complex to form the active translocon.

It is found in the cell inner membrane. Part of the twin-arginine translocation (Tat) system that transports large folded proteins containing a characteristic twin-arginine motif in their signal peptide across membranes. TatA could form the protein-conducting channel of the Tat system. In Sodalis glossinidius (strain morsitans), this protein is Sec-independent protein translocase protein TatA.